Reading from the N-terminus, the 418-residue chain is Queuine tRNA-ribosyltransferase accessory subunit 2 (418 aa).

Zn(2+) contacts are provided by Cys-325, Cys-327, Cys-330, and His-356.

The protein belongs to the queuine tRNA-ribosyltransferase family. QTRT2 subfamily. As to quaternary structure, heterodimer of a catalytic subunit and an accessory subunit. Zn(2+) serves as cofactor.

It localises to the cytoplasm. In terms of biological role, non-catalytic subunit of the queuine tRNA-ribosyltransferase (TGT) that catalyzes the base-exchange of a guanine (G) residue with queuine (Q) at position 34 (anticodon wobble position) in tRNAs with GU(N) anticodons (tRNA-Asp, -Asn, -His and -Tyr), resulting in the hypermodified nucleoside queuosine (7-(((4,5-cis-dihydroxy-2-cyclopenten-1-yl)amino)methyl)-7-deazaguanosine). The polypeptide is Queuine tRNA-ribosyltransferase accessory subunit 2 (Drosophila erecta (Fruit fly)).